The sequence spans 496 residues: Hemophilin secretion modulator (496 aa).

The N-terminal stretch at 1–19 (MKRTLLCCLTLLSCPFLYA) is a signal peptide. Transmembrane regions (beta stranded) follow at residues 198 to 208 (WQGSVSAGYTY), 253 to 263 (DYEASLIKRYA), 268 to 277 (HGVALRALAF), 291 to 301 (TININAGYSYF), 305 to 315 (NQIGVSPLFEH), 327 to 337 (WGARAEWMHFI), 341 to 351 (KAFKLEAESKD), 365 to 374 (SSAFATFWKI), 380 to 389 (TFFGGLDVLD), 403 to 413 (QGVRLGLSKSW), 418 to 427 (NTTLLSSYRW), 446 to 455 (QNHTFVVQMP), 462 to 472 (MTPNLTYRYNH), and 486 to 495 (HNISFKLEHR).

It belongs to the Slam family.

The protein localises to the cell outer membrane. Functionally, part of a high affinity heme acquisition system. Mediates the secretion of the hemophilin HphA across the outer membrane into the extracellular environment. Plays a supporting role for full virulence. The protein is Hemophilin secretion modulator of Acinetobacter baumannii.